Reading from the N-terminus, the 378-residue chain is tRNA (guanine(26)-N(2))-dimethyltransferase (378 aa).

The Trm1 methyltransferase domain maps to 4–374 (KEVTEGKVRI…KGYEEIIRCV (371 aa)). Residues Arg-44, Arg-69, Asp-87, Asp-114, and Ala-115 each contribute to the S-adenosyl-L-methionine site. The Zn(2+) site is built by Cys-246, Cys-249, Cys-263, and Cys-266.

Belongs to the class I-like SAM-binding methyltransferase superfamily. Trm1 family.

The catalysed reaction is guanosine(26) in tRNA + 2 S-adenosyl-L-methionine = N(2)-dimethylguanosine(26) in tRNA + 2 S-adenosyl-L-homocysteine + 2 H(+). Its function is as follows. Dimethylates a single guanine residue at position 26 of a number of tRNAs using S-adenosyl-L-methionine as donor of the methyl groups. This Saccharolobus islandicus (strain M.16.27) (Sulfolobus islandicus) protein is tRNA (guanine(26)-N(2))-dimethyltransferase.